Here is a 383-residue protein sequence, read N- to C-terminus: Delta(12) acyl-lipid conjugase (11E,13E-forming) (383 aa).

The tract at residues 1 to 30 (MGEVGPTNRTKTKLDKQQESENRVPHEPPP) is disordered. A compositionally biased stretch (basic and acidic residues) spans 12–26 (TKLDKQQESENRVPH). 2 helical membrane passes run 56 to 76 (VIHDIIILSFFYYVAANYIPM) and 84 to 104 (VAWPIYWAIQGCVQLGILVLG). The Histidine box-1 motif lies at 105–109 (HECGH). Positions 141–145 (HRRHH) match the Histidine box-2 motif. 3 helical membrane passes run 179–199 (FLMIFGALLFGWPSYLLFNAN), 225–245 (VIASDVGLVFAYFVLYKIALA), and 249–269 (VWLICVYGVPYVILNGLIVLI). The Histidine box-3 motif lies at 315–319 (HLVHH).

This sequence belongs to the fatty acid desaturase type 1 family. As to expression, expressed in developing seeds, but not in leaves.

It localises to the membrane. It catalyses the reaction a (9Z,12Z)-octadecadienoyl-containing glycerolipid + 2 Fe(II)-[cytochrome b5] + O2 + 2 H(+) = a (9Z,11E,13E)-octadecatrienoyl-containing glycerolipid + 2 Fe(III)-[cytochrome b5] + 2 H2O. The enzyme catalyses (9Z,12Z,15Z)-octadecatrienoyl-containing glycerolipid + 2 Fe(II)-[cytochrome b5] + O2 + 2 H(+) = a (9Z,11E,13E,15Z)-octadecatetraenoyl-containing glycerolipid + 2 Fe(III)-[cytochrome b5] + 2 H2O. It functions in the pathway lipid metabolism; polyunsaturated fatty acid biosynthesis. Converts linoleic acid to alpha-eleostearic acid (18:3(9Z,11E,13E)) and alpha-linolenic acid to alpha-parinaric acid (18:4(9Z,11E, 13E, 15Z)). Converts a single cis double bond at carbon 12 to two conjugated trans bonds at positions 11 and 13. This chain is Delta(12) acyl-lipid conjugase (11E,13E-forming), found in Impatiens balsamina (Balsam).